The sequence spans 81 residues: Large ribosomal subunit protein bL31 (81 aa).

It belongs to the bacterial ribosomal protein bL31 family. Type A subfamily. In terms of assembly, part of the 50S ribosomal subunit.

Binds the 23S rRNA. This Fusobacterium nucleatum subsp. nucleatum (strain ATCC 25586 / DSM 15643 / BCRC 10681 / CIP 101130 / JCM 8532 / KCTC 2640 / LMG 13131 / VPI 4355) protein is Large ribosomal subunit protein bL31 (rpmE).